A 670-amino-acid polypeptide reads, in one-letter code: uncharacterized protein (670 aa).

The next 10 helical transmembrane spans lie at 23–42 (YALR…YYLN), 47–69 (YWAM…SKSL), 76–98 (LLGA…FFLL), 118–140 (VAYA…VNIT), 153–170 (VCEV…MMIL), 381–403 (QWDA…SAVA), 410–432 (SLLM…GLMV), 437–454 (LWQF…MQLL), 461–483 (FAAL…NPPV), and 493–510 (NLAK…FAIL).

Belongs to the aromatic acid exporter ArAE (TC 2.A.85) family.

Its subcellular location is the cell membrane. This is an uncharacterized protein from Escherichia coli (strain K12).